The following is a 486-amino-acid chain: Malonate-semialdehyde dehydrogenase 2 (486 aa).

F154, K178, E181, R182, and S231 together coordinate NAD(+). C286 functions as the Nucleophile in the catalytic mechanism. E386 contributes to the NAD(+) binding site.

Belongs to the aldehyde dehydrogenase family. IolA subfamily. Homotetramer.

It catalyses the reaction 3-oxopropanoate + NAD(+) + CoA + H2O = hydrogencarbonate + acetyl-CoA + NADH + H(+). The enzyme catalyses 2-methyl-3-oxopropanoate + NAD(+) + CoA + H2O = propanoyl-CoA + hydrogencarbonate + NADH + H(+). It functions in the pathway polyol metabolism; myo-inositol degradation into acetyl-CoA; acetyl-CoA from myo-inositol: step 7/7. Catalyzes the oxidation of malonate semialdehyde (MSA) and methylmalonate semialdehyde (MMSA) into acetyl-CoA and propanoyl-CoA, respectively. Is involved in a myo-inositol catabolic pathway. Bicarbonate, and not CO2, is the end-product of the enzymatic reaction. The polypeptide is Malonate-semialdehyde dehydrogenase 2 (Oceanobacillus iheyensis (strain DSM 14371 / CIP 107618 / JCM 11309 / KCTC 3954 / HTE831)).